An 82-amino-acid chain; its full sequence is Putative defensin-like protein 48 (82 aa).

The signal sequence occupies residues 1 to 28 (MGIKTLIIFFHIFILAVLSSNNIILTSG). Disulfide bonds link cysteine 39-cysteine 80, cysteine 43-cysteine 67, cysteine 53-cysteine 78, and cysteine 57-cysteine 79.

It belongs to the DEFL family.

The protein resides in the secreted. The protein is Putative defensin-like protein 48 of Arabidopsis thaliana (Mouse-ear cress).